Consider the following 111-residue polypeptide: Cytochrome c3, 26 kDa (111 aa).

Residues His-30, His-33, Cys-38, Cys-41, His-42, His-43, Cys-54, Cys-59, His-60, His-77, Cys-86, Cys-89, His-90, Cys-105, Cys-108, and His-109 each contribute to the heme c site.

As to quaternary structure, homodimer. The cofactor is heme c.

The protein localises to the periplasm. In terms of biological role, participates in sulfate respiration coupled with phosphorylation by transferring electrons from the enzyme dehydrogenase to ferredoxin. The sequence is that of Cytochrome c3, 26 kDa from Desulfomicrobium norvegicum (strain DSM 1741 / NCIMB 8310) (Desulfovibrio baculatus (strain Norway 4)).